A 210-amino-acid polypeptide reads, in one-letter code: MASALALKRLLSSSIAPRSRSVLRPAVSSRLFNTNAVRSYDDDGENGDGVDLYRRSVPRRRGDFFSDVFDPFSPTRSVSQVLNLMDQFMENPLLSATRGMGASGARRGWDIKEKDDALYLRIDMPGLSREDVKLALEQDTLVIRGEGKNEEDGGEEGESGNRRFTSRIGLPDKIYKIDEIKAEMKNGVLKVVIPKMKEQERNDVRQIEIN.

Residues 1–31 constitute a mitochondrion transit peptide; that stretch reads MASALALKRLLSSSIAPRSRSVLRPAVSSRL. Positions 100 to 210 constitute a sHSP domain; it reads MGASGARRGW…RNDVRQIEIN (111 aa). Positions 145–165 are disordered; it reads GEGKNEEDGGEEGESGNRRFT.

The protein belongs to the small heat shock protein (HSP20) family. May form oligomeric structures.

The protein localises to the mitochondrion. In Arabidopsis thaliana (Mouse-ear cress), this protein is 23.6 kDa heat shock protein, mitochondrial (HSP23.6).